The sequence spans 332 residues: Glycerol-3-phosphate dehydrogenase [NAD(P)+] (332 aa).

NADPH-binding residues include Trp13, Lys34, and Lys108. Sn-glycerol 3-phosphate is bound by residues Lys108, Gly136, and Ser138. Ala140 lines the NADPH pocket. The sn-glycerol 3-phosphate site is built by Lys191, Asp244, Ser254, Arg255, and Asn256. Catalysis depends on Lys191, which acts as the Proton acceptor. NADPH is bound at residue Arg255. Val279 and Glu281 together coordinate NADPH.

This sequence belongs to the NAD-dependent glycerol-3-phosphate dehydrogenase family.

Its subcellular location is the cytoplasm. It carries out the reaction sn-glycerol 3-phosphate + NAD(+) = dihydroxyacetone phosphate + NADH + H(+). The enzyme catalyses sn-glycerol 3-phosphate + NADP(+) = dihydroxyacetone phosphate + NADPH + H(+). It participates in membrane lipid metabolism; glycerophospholipid metabolism. Functionally, catalyzes the reduction of the glycolytic intermediate dihydroxyacetone phosphate (DHAP) to sn-glycerol 3-phosphate (G3P), the key precursor for phospholipid synthesis. This is Glycerol-3-phosphate dehydrogenase [NAD(P)+] from Francisella philomiragia subsp. philomiragia (strain ATCC 25017 / CCUG 19701 / FSC 153 / O#319-036).